Here is a 301-residue protein sequence, read N- to C-terminus: Golgi to ER traffic protein 2 (301 aa).

The Cytoplasmic segment spans residues 1–167; that stretch reads MSEPVVDTAE…LEYNTYNQKL (167 aa). Low complexity predominate over residues 42 to 55; that stretch reads SQGSSVKTSGVKSV. The segment at 42–93 is disordered; that stretch reads SQGSSVKTSGVKSVLDQEKEATSSHDDDPEIQDITEITTPPPRTPPIGEDAP. Positions 56–67 are enriched in basic and acidic residues; sequence LDQEKEATSSHD. A helical membrane pass occupies residues 168–188; sequence WKFRFLLVRVLVTLFNFFYHY. At 189–214 the chain is on the lumenal side; that stretch reads TSISDFHASNYAYVRDLSSEEYPVRD. A helical membrane pass occupies residues 215 to 234; that stretch reads FFTWFATSEVVLVAAYYSVF. At 235 to 278 the chain is on the cytoplasmic side; that stretch reads HSLGLFHAANQNSIILKVMSMGSMILPQLESYKPLVARFLGYYE. A helical membrane pass occupies residues 279–299; that stretch reads LLGIVLGGLSLVIVLFGLLSF. Topologically, residues 300–301 are lumenal; sequence AN.

It belongs to the GET2 family. Component of the Golgi to ER traffic (GET) complex, which is composed of GET1, GET2 and GET3. Within the complex, GET1 and GET2 form a heterotetramer which is stabilized by phosphatidylinositol binding and which binds to the GET3 homodimer.

The protein resides in the endoplasmic reticulum membrane. The protein localises to the golgi apparatus membrane. Functionally, required for the post-translational delivery of tail-anchored (TA) proteins to the endoplasmic reticulum. Together with GET1, acts as a membrane receptor for soluble GET3, which recognizes and selectively binds the transmembrane domain of TA proteins in the cytosol. The GET complex cooperates with the HDEL receptor ERD2 to mediate the ATP-dependent retrieval of resident ER proteins that contain a C-terminal H-D-E-L retention signal from the Golgi to the ER. This chain is Golgi to ER traffic protein 2, found in Candida dubliniensis (strain CD36 / ATCC MYA-646 / CBS 7987 / NCPF 3949 / NRRL Y-17841) (Yeast).